The primary structure comprises 237 residues: Coat protein (237 aa).

The disordered stretch occupies residues Met-1–Thr-28.

The protein belongs to the potexvirus capsid protein family.

The protein resides in the virion. Required for genome encapsidation. Forms ribonucleoprotein complexes along with TGB1 helicase and viral RNA. This Brassica campestris (Field mustard) protein is Coat protein.